The following is a 308-amino-acid chain: Glutaminase (308 aa).

Ser-66, Asn-117, Glu-161, Asn-168, Tyr-192, Tyr-244, and Val-262 together coordinate substrate.

Belongs to the glutaminase family. As to quaternary structure, homotetramer.

The catalysed reaction is L-glutamine + H2O = L-glutamate + NH4(+). The sequence is that of Glutaminase from Shigella dysenteriae serotype 1 (strain Sd197).